Here is a 291-residue protein sequence, read N- to C-terminus: ATP synthase gamma chain (291 aa).

Belongs to the ATPase gamma chain family. F-type ATPases have 2 components, CF(1) - the catalytic core - and CF(0) - the membrane proton channel. CF(1) has five subunits: alpha(3), beta(3), gamma(1), delta(1), epsilon(1). CF(0) has three main subunits: a, b and c.

The protein localises to the cell inner membrane. Produces ATP from ADP in the presence of a proton gradient across the membrane. The gamma chain is believed to be important in regulating ATPase activity and the flow of protons through the CF(0) complex. The sequence is that of ATP synthase gamma chain from Rhodopseudomonas palustris (strain BisB5).